We begin with the raw amino-acid sequence, 91 residues long: Large ribosomal subunit protein uL23c (91 aa).

This sequence belongs to the universal ribosomal protein uL23 family. In terms of assembly, part of the 50S ribosomal subunit.

The protein localises to the plastid. It localises to the chloroplast. Binds to 23S rRNA. In Chaetosphaeridium globosum (Charophycean green alga), this protein is Large ribosomal subunit protein uL23c (rpl23).